Here is a 323-residue protein sequence, read N- to C-terminus: Ribose 1,5-bisphosphate isomerase (323 aa).

Residues 22 to 25 (RGAA) and R65 each bind substrate. Catalysis depends on C130, which acts as the Proton acceptor. Residue D199 is the Proton donor of the active site. Substrate-binding positions include 209–210 (NK) and K235. A Glycyl lysine isopeptide (Lys-Gly) (interchain with G-Cter in SAMP2) cross-link involves residue K210.

It belongs to the eIF-2B alpha/beta/delta subunits family. R15P isomerase subfamily.

The enzyme catalyses alpha-D-ribose 1,5-bisphosphate = D-ribulose 1,5-bisphosphate. In terms of biological role, catalyzes the isomerization of ribose 1,5-bisphosphate (R15P) to ribulose 1,5-bisphosphate (RuBP), the CO(2) acceptor and substrate for RubisCO. Functions in an archaeal AMP degradation pathway, together with AMP phosphorylase and RubisCO. This is Ribose 1,5-bisphosphate isomerase from Haloferax volcanii (strain ATCC 29605 / DSM 3757 / JCM 8879 / NBRC 14742 / NCIMB 2012 / VKM B-1768 / DS2) (Halobacterium volcanii).